A 473-amino-acid polypeptide reads, in one-letter code: Photosystem II CP43 reaction center protein (473 aa).

Residues 1 to 14 (MKTLYSPRRFYPVE) constitute a propeptide that is removed on maturation. Thr15 bears the N-acetylthreonine mark. Thr15 carries the phosphothreonine modification. 5 consecutive transmembrane segments (helical) span residues 69–93 (LFEV…PHLA), 134–155 (LIGP…KDRN), 178–200 (KALF…RKIT), 255–275 (KPFA…LSYS), and 291–312 (WFNN…ASQA). Residue Glu367 participates in [CaMn4O5] cluster binding. A helical membrane pass occupies residues 447 to 471 (RARAAAAGFEKGIDRDLEPVLFMTP).

Belongs to the PsbB/PsbC family. PsbC subfamily. In terms of assembly, PSII is composed of 1 copy each of membrane proteins PsbA, PsbB, PsbC, PsbD, PsbE, PsbF, PsbH, PsbI, PsbJ, PsbK, PsbL, PsbM, PsbT, PsbX, PsbY, PsbZ, Psb30/Ycf12, at least 3 peripheral proteins of the oxygen-evolving complex and a large number of cofactors. It forms dimeric complexes. Requires Binds multiple chlorophylls and provides some of the ligands for the Ca-4Mn-5O cluster of the oxygen-evolving complex. It may also provide a ligand for a Cl- that is required for oxygen evolution. PSII binds additional chlorophylls, carotenoids and specific lipids. as cofactor.

Its subcellular location is the plastid. The protein resides in the chloroplast thylakoid membrane. Its function is as follows. One of the components of the core complex of photosystem II (PSII). It binds chlorophyll and helps catalyze the primary light-induced photochemical processes of PSII. PSII is a light-driven water:plastoquinone oxidoreductase, using light energy to abstract electrons from H(2)O, generating O(2) and a proton gradient subsequently used for ATP formation. In Welwitschia mirabilis (Tree tumbo), this protein is Photosystem II CP43 reaction center protein.